The chain runs to 256 residues: Isoprenyl transferase (256 aa).

Aspartate 33 is a catalytic residue. Aspartate 33 contributes to the Mg(2+) binding site. Substrate-binding positions include 34 to 37 (GNGR), tryptophan 38, arginine 46, histidine 50, and 78 to 80 (STE). The Proton acceptor role is filled by asparagine 81. Substrate contacts are provided by residues tryptophan 82, arginine 84, arginine 201, and 207-209 (RIS). Position 220 (glutamate 220) interacts with Mg(2+).

Belongs to the UPP synthase family. Homodimer. Mg(2+) serves as cofactor.

Its function is as follows. Catalyzes the condensation of isopentenyl diphosphate (IPP) with allylic pyrophosphates generating different type of terpenoids. This is Isoprenyl transferase from Staphylococcus epidermidis (strain ATCC 35984 / DSM 28319 / BCRC 17069 / CCUG 31568 / BM 3577 / RP62A).